A 102-amino-acid polypeptide reads, in one-letter code: Alpha-ketoglutarate dehydrogenase component 4 (102 aa).

G2 carries the N-acetylglycine modification. An N6-succinyllysine modification is found at K4. The tract at residues 23–70 is disordered; that stretch reads KFPNRRDKPKLSASEALGSAALPSHSSAISQHSKGSTSPDLLMHQGPP. Over residues 33–46 the composition is skewed to low complexity; sequence LSASEALGSAALPS. Polar residues predominate over residues 47–61; the sequence is HSSAISQHSKGSTSP. Phosphoserine is present on residues S48, S60, and S89.

It belongs to the alpha-ketoglutarate dehydrogenase component 4 family. Component of the 2-oxoglutarate dehydrogenase complex (OGDHC), composed of OGDH (2-oxoglutarate dehydrogenase; also called E1 subunit), DLST (dihydrolipoamide succinyltransferase; also called E2 subunit) and DLD (dihydrolipoamide dehydrogenase; also called E3 subunit), and the assembly factor KGD4. Within OGDHC complex, interacts (via N-terminus) with E3 subunit and (via C-terminus) with E2 subunit.

The protein resides in the mitochondrion. Functionally, molecular adapter that is necessary to form a stable 2-oxoglutarate dehydrogenase enzyme complex (OGDHC). Enables the specific recruitment of E3 subunit to E2 subunit in the 2-oxoglutarate dehydrogenase complex (OGDHC). The sequence is that of Alpha-ketoglutarate dehydrogenase component 4 from Mus musculus (Mouse).